The primary structure comprises 48 residues: uncharacterized protein (48 aa).

Residues 21–43 traverse the membrane as a helical segment; that stretch reads SIFVSLGVFAVSVAILKSRLGNF.

The protein resides in the membrane. This is an uncharacterized protein from Schizosaccharomyces pombe (strain 972 / ATCC 24843) (Fission yeast).